Reading from the N-terminus, the 224-residue chain is Vesicle transport through interaction with t-SNAREs homolog 1A (224 aa).

Over 1–199 the chain is Cytoplasmic; sequence MSADFEGYEQ…GMLRRIIQNR (199 aa). 2 coiled-coil regions span residues 31 to 92 and 106 to 185; these read PDEK…KRSR and DAGN…GKSS. The chain crosses the membrane as a helical; Anchor for type IV membrane protein span at residues 200-220; it reads ILLVILGIIVVITILTAITFF. Over 221–224 the chain is Vesicular; it reads VRGH.

Belongs to the VTI1 family. As to quaternary structure, interacts with distinct SNARE complexes that contain either STX5 or STX6. Interacts with NAPA and, to a lesser extent, with NAPG. Identified in a complex containing STX6, STX12, VAMP4 and VTI1A. As to expression, specifically expressed in the neuronal tissues cerebellum, cortex and hippocampus. Isoform 1/VTI1A is expressed in the same neuronal tissues but also in lung, liver, kidney and spleen.

It is found in the membrane. It localises to the cytoplasmic vesicle. The protein resides in the secretory vesicle. The protein localises to the synaptic vesicle membrane. Its subcellular location is the clathrin-coated vesicle membrane. It is found in the golgi apparatus membrane. V-SNARE that mediates vesicle transport pathways through interactions with t-SNAREs on the target membrane. These interactions are proposed to mediate aspects of the specificity of vesicle trafficking and to promote fusion of the lipid bilayers. Involved in vesicular transport from the late endosomes to the trans-Golgi network. Along with VAMP7, involved in an non-conventional RAB1-dependent traffic route to the cell surface used by KCNIP1 and KCND2. May be concerned with increased secretion of cytokines associated with cellular senescence. This Rattus norvegicus (Rat) protein is Vesicle transport through interaction with t-SNAREs homolog 1A (Vti1a).